The sequence spans 98 residues: NADH-ubiquinone oxidoreductase chain 4L (98 aa).

3 helical membrane passes run 1–21 (MTMV…GLLM), 29–49 (SLLC…VTIL), and 61–81 (IVLL…LVMV).

This sequence belongs to the complex I subunit 4L family. Core subunit of respiratory chain NADH dehydrogenase (Complex I) which is composed of 45 different subunits.

Its subcellular location is the mitochondrion inner membrane. It carries out the reaction a ubiquinone + NADH + 5 H(+)(in) = a ubiquinol + NAD(+) + 4 H(+)(out). Functionally, core subunit of the mitochondrial membrane respiratory chain NADH dehydrogenase (Complex I) which catalyzes electron transfer from NADH through the respiratory chain, using ubiquinone as an electron acceptor. Part of the enzyme membrane arm which is embedded in the lipid bilayer and involved in proton translocation. The chain is NADH-ubiquinone oxidoreductase chain 4L (MT-ND4L) from Monachus monachus (Mediterranean monk seal).